Here is a 332-residue protein sequence, read N- to C-terminus: Tryptophan--tRNA ligase (332 aa).

ATP is bound by residues 11–13 (TST) and 19–20 (GN). A 'HIGH' region motif is present at residues 12 to 20 (STGKLTLGN). An L-tryptophan-binding site is contributed by aspartate 140. ATP is bound by residues 152 to 154 (GQD), isoleucine 191, and 200 to 204 (KMSKS). The short motif at 200–204 (KMSKS) is the 'KMSKS' region element.

Belongs to the class-I aminoacyl-tRNA synthetase family. In terms of assembly, homodimer.

The protein localises to the cytoplasm. The catalysed reaction is tRNA(Trp) + L-tryptophan + ATP = L-tryptophyl-tRNA(Trp) + AMP + diphosphate + H(+). Functionally, catalyzes the attachment of tryptophan to tRNA(Trp). This chain is Tryptophan--tRNA ligase, found in Mycoplasmopsis pulmonis (strain UAB CTIP) (Mycoplasma pulmonis).